A 167-amino-acid polypeptide reads, in one-letter code: Leptin (167 aa).

The signal sequence occupies residues 1-21; the sequence is MRCGPLYQFLWLWPYLSYVEA. Cys117 and Cys167 are joined by a disulfide.

Belongs to the leptin family.

The protein resides in the secreted. Key player in the regulation of energy balance and body weight control. Once released into the circulation, has central and peripheral effects by binding LEPR, found in many tissues, which results in the activation of several major signaling pathways. In the hypothalamus, acts as an appetite-regulating factor that induces a decrease in food intake and an increase in energy consumption by inducing anorexinogenic factors and suppressing orexigenic neuropeptides, also regulates bone mass and secretion of hypothalamo-pituitary-adrenal hormones. In the periphery, increases basal metabolism, influences reproductive function, regulates pancreatic beta-cell function and insulin secretion, is pro-angiogenic for endothelial cell and affects innate and adaptive immunity. In the arcuate nucleus of the hypothalamus, activates by depolarization POMC neurons inducing FOS and SOCS3 expression to release anorexigenic peptides and inhibits by hyperpolarization NPY neurons inducing SOCS3 with a consequent reduction on release of orexigenic peptides. In addition to its known satiety inducing effect, has a modulatory role in nutrient absorption. In the intestine, reduces glucose absorption by enterocytes by activating PKC and leading to a sequential activation of p38, PI3K and ERK signaling pathways which exerts an inhibitory effect on glucose absorption. Acts as a growth factor on certain tissues, through the activation of different signaling pathways increases expression of genes involved in cell cycle regulation such as CCND1, via JAK2-STAT3 pathway, or VEGFA, via MAPK1/3 and PI3K-AKT1 pathways. May also play an apoptotic role via JAK2-STAT3 pathway and up-regulation of BIRC5 expression. Pro-angiogenic, has mitogenic activity on vascular endothelial cells and plays a role in matrix remodeling by regulating the expression of matrix metalloproteinases (MMPs) and tissue inhibitors of metalloproteinases (TIMPs). In innate immunity, modulates the activity and function of neutrophils by increasing chemotaxis and the secretion of oxygen radicals. Increases phagocytosis by macrophages and enhances secretion of pro-inflammatory mediators. Increases cytotoxic ability of NK cells. Plays a pro-inflammatory role, in synergy with IL1B, by inducing NOS2 which promotes the production of IL6, IL8 and Prostaglandin E2, through a signaling pathway that involves JAK2, PI3K, MAP2K1/MEK1 and MAPK14/p38. In adaptive immunity, promotes the switch of memory T-cells towards T helper-1 cell immune responses. Increases CD4(+)CD25(-) T-cell proliferation and reduces autophagy during TCR (T-cell receptor) stimulation, through MTOR signaling pathway activation and BCL2 up-regulation. The polypeptide is Leptin (LEP) (Bubalus bubalis (Domestic water buffalo)).